A 228-amino-acid polypeptide reads, in one-letter code: Large ribosomal subunit protein uL3 (228 aa).

The protein belongs to the universal ribosomal protein uL3 family. As to quaternary structure, part of the 50S ribosomal subunit. Forms a cluster with proteins L14 and L19.

One of the primary rRNA binding proteins, it binds directly near the 3'-end of the 23S rRNA, where it nucleates assembly of the 50S subunit. This Leuconostoc mesenteroides subsp. mesenteroides (strain ATCC 8293 / DSM 20343 / BCRC 11652 / CCM 1803 / JCM 6124 / NCDO 523 / NBRC 100496 / NCIMB 8023 / NCTC 12954 / NRRL B-1118 / 37Y) protein is Large ribosomal subunit protein uL3.